A 496-amino-acid chain; its full sequence is Glutamyl-tRNA(Gln) amidotransferase subunit A, mitochondrial (496 aa).

Active-site charge relay system residues include Lys-75 and Ser-162. Ser-186 (acyl-ester intermediate) is an active-site residue.

This sequence belongs to the amidase family. GatA subfamily. As to quaternary structure, subunit of the heterotrimeric GatCAB amidotransferase (AdT) complex, composed of A, B and C subunits.

The protein resides in the mitochondrion. The catalysed reaction is L-glutamyl-tRNA(Gln) + L-glutamine + ATP + H2O = L-glutaminyl-tRNA(Gln) + L-glutamate + ADP + phosphate + H(+). Its function is as follows. Allows the formation of correctly charged Gln-tRNA(Gln) through the transamidation of misacylated Glu-tRNA(Gln) in the mitochondria. The reaction takes place in the presence of glutamine and ATP through an activated gamma-phospho-Glu-tRNA(Gln). The protein is Glutamyl-tRNA(Gln) amidotransferase subunit A, mitochondrial of Pediculus humanus subsp. corporis (Body louse).